The sequence spans 154 residues: Transcriptional repressor NrdR (154 aa).

A zinc finger lies at 3–34 (CPFCRHPDSRVIDSRETDEGQAIRRRRSCPEC). The ATP-cone domain occupies 46–136 (LAVVKRSGVT…VYRSFESADD (91 aa)).

It belongs to the NrdR family. Zn(2+) serves as cofactor.

In terms of biological role, negatively regulates transcription of bacterial ribonucleotide reductase nrd genes and operons by binding to NrdR-boxes. The polypeptide is Transcriptional repressor NrdR (Mycobacterium avium (strain 104)).